Consider the following 147-residue polypeptide: uncharacterized protein (147 aa).

This is an uncharacterized protein from Mycoplasma pneumoniae (strain ATCC 29342 / M129 / Subtype 1) (Mycoplasmoides pneumoniae).